Reading from the N-terminus, the 397-residue chain is DnaJ homolog subfamily A member 1 (397 aa).

The region spanning 6–68 (TYYDVLGVKP…KKRELYDKGG (63 aa)) is the J domain. Position 66 is an N6-acetyllysine (Lys66). Position 83 is a phosphoserine (Ser83). Residues 121 to 205 (GATRKLALQK…CNGRKIVREK (85 aa)) form a CR-type zinc finger. Zn(2+) contacts are provided by Cys134, Cys137, Cys150, Cys153, Cys177, Cys180, Cys193, and Cys196. CXXCXGXG motif repeat units lie at residues 134 to 141 (CDKCEGRG), 150 to 157 (CPNCRGTG), 177 to 184 (CMECQGHG), and 193 to 200 (CKSCNGRK). Ser335 bears the Phosphoserine mark. The tract at residues 352–397 (VEETDEMDQVELVDFDPNQERRRHYNGEAYEDDEHHPRGGVQCQTS) is disordered. The segment covering 353–365 (EETDEMDQVELVD) has biased composition (acidic residues). The residue at position 381 (Tyr381) is a Phosphotyrosine. At Cys394 the chain carries Cysteine methyl ester. Cys394 is lipidated: S-farnesyl cysteine. The propeptide at 395 to 397 (QTS) is removed in mature form.

As to quaternary structure, identified in a complex with HSPA1B and BAX. Interacts with RNF207.

It localises to the membrane. It is found in the cytoplasm. The protein resides in the microsome. Its subcellular location is the mitochondrion. The protein localises to the nucleus. It localises to the perinuclear region. In terms of biological role, co-chaperone for HSPA8/Hsc70. Plays a role in protein transport into mitochondria via its role as co-chaperone. Stimulates ATP hydrolysis, but not the folding of unfolded proteins mediated by HSPA1A (in vitro). Promotes apoptosis in response to cellular stress mediated by exposure to anisomycin or UV. Functions as co-chaperone for HSPA1B and negatively regulates the translocation of BAX from the cytosol to mitochondria in response to cellular stress, thereby protecting cells against apoptosis. The polypeptide is DnaJ homolog subfamily A member 1 (Dnaja1) (Mus musculus (Mouse)).